We begin with the raw amino-acid sequence, 485 residues long: Glutamate--tRNA ligase 1 (485 aa).

Positions 9–19 (PSPTGHLHIGG) match the 'HIGH' region motif. The 'KMSKS' region motif lies at 250–254 (KMSKR). Residue K253 participates in ATP binding.

This sequence belongs to the class-I aminoacyl-tRNA synthetase family. Glutamate--tRNA ligase type 1 subfamily. Monomer.

Its subcellular location is the cytoplasm. It catalyses the reaction tRNA(Glu) + L-glutamate + ATP = L-glutamyl-tRNA(Glu) + AMP + diphosphate. Its function is as follows. Catalyzes the attachment of glutamate to tRNA(Glu) in a two-step reaction: glutamate is first activated by ATP to form Glu-AMP and then transferred to the acceptor end of tRNA(Glu). This Caldicellulosiruptor saccharolyticus (strain ATCC 43494 / DSM 8903 / Tp8T 6331) protein is Glutamate--tRNA ligase 1.